The primary structure comprises 182 residues: Doublesex- and mab-3-related transcription factor C1 (182 aa).

At T15 the chain carries Phosphoserine. Residues A26–G39 are compositionally biased toward polar residues. Disordered stretches follow at residues A26–E48 and Q136–H174.

This sequence belongs to the DMRT family. As to expression, expressed in Sertoli cells in male testis.

In Mus musculus (Mouse), this protein is Doublesex- and mab-3-related transcription factor C1 (Dmrtc1).